A 656-amino-acid chain; its full sequence is Translation factor GUF1 homolog, mitochondrial (656 aa).

The tr-type G domain maps to Gln55–Asp236. GTP is bound by residues Ala64 to Ser71, Asp129 to His133, and Asn183 to Asp186.

The protein belongs to the TRAFAC class translation factor GTPase superfamily. Classic translation factor GTPase family. LepA subfamily.

Its subcellular location is the mitochondrion inner membrane. The enzyme catalyses GTP + H2O = GDP + phosphate + H(+). Functionally, promotes mitochondrial protein synthesis. May act as a fidelity factor of the translation reaction, by catalyzing a one-codon backward translocation of tRNAs on improperly translocated ribosomes. Binds to mitochondrial ribosomes in a GTP-dependent manner. The chain is Translation factor GUF1 homolog, mitochondrial from Aedes aegypti (Yellowfever mosquito).